Here is a 216-residue protein sequence, read N- to C-terminus: uncharacterized protein (216 aa).

A helical transmembrane segment spans residues 1–21; the sequence is MTIVHFVGSLFFFFFFSYIFF.

It localises to the membrane. This is an uncharacterized protein from Saccharomyces cerevisiae (strain ATCC 204508 / S288c) (Baker's yeast).